The primary structure comprises 450 residues: Cysteine protease ATG4C (450 aa).

Catalysis depends on C112, which acts as the Nucleophile. Residues D336 and H338 contribute to the active site.

Belongs to the peptidase C54 family.

Its subcellular location is the cytoplasm. It carries out the reaction [protein]-C-terminal L-amino acid-glycyl-phosphatidylethanolamide + H2O = [protein]-C-terminal L-amino acid-glycine + a 1,2-diacyl-sn-glycero-3-phosphoethanolamine. Its function is as follows. Cysteine protease that plays a key role in autophagy by mediating both proteolytic activation and delipidation of ATG8 family proteins. The protease activity is required for proteolytic activation of ATG8 family proteins: cleaves the C-terminal amino acid of ATG8 proteins to reveal a C-terminal glycine. Exposure of the glycine at the C-terminus is essential for ATG8 proteins conjugation to phosphatidylethanolamine (PE) and insertion to membranes, which is necessary for autophagy. In addition to the protease activity, also mediates delipidation of ATG8 family proteins. Catalyzes delipidation of PE-conjugated forms of ATG8 proteins during macroautophagy. In Xenopus laevis (African clawed frog), this protein is Cysteine protease ATG4C.